A 183-amino-acid polypeptide reads, in one-letter code: MAQDQNHLIWLDMEMTGLQPDSDRIIEIAIVITDSQLNTVAEAPVIAVHQPDSVLDAMDEWNRNTHGKSGLTDRVKASLIGEADAEAQMLAFLQQHVPAHTSPMCGNSICQDRRFMARYMPHLEAWFHYRNLDVSTLKELAKRWRPEVYKGVEKKGKHEALADIRESIAELRHYRDNFLRLVP.

Residues 8–171 (LIWLDMEMTG…ADIRESIAEL (164 aa)) form the Exonuclease domain. Tyr129 is an active-site residue.

Belongs to the oligoribonuclease family.

It localises to the cytoplasm. Its function is as follows. 3'-to-5' exoribonuclease specific for small oligoribonucleotides. In Aromatoleum aromaticum (strain DSM 19018 / LMG 30748 / EbN1) (Azoarcus sp. (strain EbN1)), this protein is Oligoribonuclease.